A 180-amino-acid chain; its full sequence is Putative adenylate kinase (180 aa).

The ATP site is built by glycine 10, glycine 12, lysine 13, threonine 14, and threonine 15. Positions 30–50 (SVKELALSRGIGERVSDEIEI) are NMP. The segment at 99-109 (ARGYSKKKLAE) is LID. Residues arginine 100 and lysine 138 each coordinate ATP.

It belongs to the adenylate kinase family. AK6 subfamily. Interacts with uS11. Not a structural component of 40S pre-ribosomes, but transiently interacts with them by binding to uS11.

The enzyme catalyses AMP + ATP = 2 ADP. It carries out the reaction ATP + H2O = ADP + phosphate + H(+). Its function is as follows. Broad-specificity nucleoside monophosphate (NMP) kinase that catalyzes the reversible transfer of the terminal phosphate group between nucleoside triphosphates and monophosphates. Also has ATPase activity. Involved in the late maturation steps of the 30S ribosomal particles, specifically 16S rRNA maturation. While NMP activity is not required for ribosome maturation, ATPase activity is. Associates transiently with small ribosomal subunit protein uS11. ATP hydrolysis breaks the interaction with uS11. May temporarily remove uS11 from the ribosome to enable a conformational change of the ribosomal RNA that is needed for the final maturation step of the small ribosomal subunit. This chain is Putative adenylate kinase, found in Thermococcus onnurineus (strain NA1).